The sequence spans 348 residues: Lipopolysaccharide heptosyltransferase 2 (348 aa).

Belongs to the glycosyltransferase 9 family.

The catalysed reaction is an L-alpha-D-Hep-(1-&gt;5)-[alpha-Kdo-(2-&gt;4)]-alpha-Kdo-(2-&gt;6)-lipid A + ADP-L-glycero-beta-D-manno-heptose = an L-alpha-D-Hep-(1-&gt;3)-L-alpha-D-Hep-(1-&gt;5)-[alpha-Kdo-(2-&gt;4)]-alpha-Kdo-(2-&gt;6)-lipid A + ADP + H(+). It participates in bacterial outer membrane biogenesis; LPS core biosynthesis. Functionally, glycosyltransferase involved in the biosynthesis of the core oligosaccharide region of lipopolysaccharide (LPS). Catalyzes the addition of the second heptose unit to the heptosyl-Kdo2-lipid A module. The protein is Lipopolysaccharide heptosyltransferase 2 of Salmonella typhimurium (strain LT2 / SGSC1412 / ATCC 700720).